The sequence spans 500 residues: tRNA modification GTPase MnmE (500 aa).

3 residues coordinate (6S)-5-formyl-5,6,7,8-tetrahydrofolate: arginine 24, glutamate 120, and lysine 159. Residues 256 to 420 enclose the TrmE-type G domain; sequence GIPVAIIGET…LEKKLVQAAA (165 aa). Position 266 (asparagine 266) interacts with K(+). GTP is bound by residues 266–271, 285–291, and 310–313; these read NAGKST, SDIHGTT, and DTAG. Serine 270 serves as a coordination point for Mg(2+). Serine 285, isoleucine 287, and threonine 290 together coordinate K(+). Mg(2+) is bound at residue threonine 291. Lysine 500 is a (6S)-5-formyl-5,6,7,8-tetrahydrofolate binding site.

The protein belongs to the TRAFAC class TrmE-Era-EngA-EngB-Septin-like GTPase superfamily. TrmE GTPase family. Homodimer. Heterotetramer of two MnmE and two MnmG subunits. K(+) serves as cofactor.

The protein localises to the cytoplasm. Its function is as follows. Exhibits a very high intrinsic GTPase hydrolysis rate. Involved in the addition of a carboxymethylaminomethyl (cmnm) group at the wobble position (U34) of certain tRNAs, forming tRNA-cmnm(5)s(2)U34. This is tRNA modification GTPase MnmE from Phocaeicola vulgatus (strain ATCC 8482 / DSM 1447 / JCM 5826 / CCUG 4940 / NBRC 14291 / NCTC 11154) (Bacteroides vulgatus).